A 523-amino-acid polypeptide reads, in one-letter code: Vanin-like protein 3 (523 aa).

Residues 1–19 form the signal peptide; sequence MAVFLRRFLWLISFTLVLT. A CN hydrolase domain is found at 29 to 298; sequence YIAGVVEYRP…RKLLLAKVPL (270 aa). N-linked (GlcNAc...) asparagine glycosylation is present at asparagine 64. Catalysis depends on glutamate 74, which acts as the Proton acceptor. The Proton donor role is filled by lysine 167. N-linked (GlcNAc...) asparagine glycosylation is found at asparagine 177 and asparagine 192. Cysteine 200 acts as the Nucleophile in catalysis. 2 N-linked (GlcNAc...) asparagine glycosylation sites follow: asparagine 330 and asparagine 468. Asparagine 498 carries GPI-anchor amidated asparagine lipidation. A propeptide spans 499–523 (removed in mature form); the sequence is GGAGRLGTLLFLLITPLIMMHLFRE.

Belongs to the carbon-nitrogen hydrolase superfamily. BTD/VNN family. Expressed in third instar larvae.

It localises to the cell membrane. This is Vanin-like protein 3 from Drosophila melanogaster (Fruit fly).